The chain runs to 783 residues: Protein involved in starch initiation 1 (783 aa).

A chloroplast-targeting transit peptide spans 1–27; that stretch reads MGFSQAIRLNLASFSSPSPCDYCLTRV. 3 coiled-coil regions span residues 128–309, 345–432, and 457–512; these read LHDA…LKEE, LVFS…LELA, and LQEK…LKAL.

In terms of assembly, interacts with PTST2; the interaction is essential for the initiation of starch granules biosynthesis in leaf chloroplasts. Interacts with SS4; the interaction is essential for the initiation of starch granules biosynthesis in leaf chloroplasts.

It localises to the plastid. The protein localises to the chloroplast. In terms of biological role, required for the initiation of starch granules biosynthesis in leaf chloroplasts. Involved in determining starch granule number and size in chloroplasts. The protein is Protein involved in starch initiation 1 of Arabidopsis thaliana (Mouse-ear cress).